A 102-amino-acid polypeptide reads, in one-letter code: Large ribosomal subunit protein bL21 (102 aa).

This sequence belongs to the bacterial ribosomal protein bL21 family. In terms of assembly, part of the 50S ribosomal subunit. Contacts protein L20.

In terms of biological role, this protein binds to 23S rRNA in the presence of protein L20. The polypeptide is Large ribosomal subunit protein bL21 (Finegoldia magna (strain ATCC 29328 / DSM 20472 / WAL 2508) (Peptostreptococcus magnus)).